The primary structure comprises 163 residues: Sorting nexin-3 (163 aa).

Residues 1-20 (MASDQDNSGLDAPGSQFHRP) form a disordered region. A PX domain is found at 42 to 159 (NFLEIEVRNP…AAFVQDPNWD (118 aa)). A 1,2-diacyl-sn-glycero-3-phospho-(1D-myo-inositol-3-phosphate)-binding residues include arginine 85, serine 87, lysine 111, arginine 116, and arginine 125.

Belongs to the sorting nexin family.

The protein localises to the cytoplasm. The protein resides in the golgi apparatus membrane. It is found in the prevacuolar compartment membrane. Required for retention of late Golgi membrane proteins. Component of the retrieval machinery that functions by direct interaction with the cytosolic tails of certain TGN membrane proteins during the sorting/budding process at the prevacuolar compartment. Binds phosphatidylinositol 3-phosphate (PtdIns(P3)). In Gibberella zeae (strain ATCC MYA-4620 / CBS 123657 / FGSC 9075 / NRRL 31084 / PH-1) (Wheat head blight fungus), this protein is Sorting nexin-3 (SNX3).